Consider the following 375-residue polypeptide: Alcohol dehydrogenase 1A (375 aa).

Ser2 carries the N-acetylserine modification. Ser23 carries the phosphoserine modification. Cys47 is a Zn(2+) binding site. 48–52 is a binding site for NAD(+); sequence GTDDH. 6 residues coordinate Zn(2+): His68, Cys98, Cys101, Cys104, Cys112, and Cys175. Residues 200-205, Asp224, Lys229, Ile270, 293-295, 318-320, and Arg370 each bind NAD(+); these read GLGGVG, VGV, and AIL.

This sequence belongs to the zinc-containing alcohol dehydrogenase family. Dimer of identical or heterodimer of closely related subunits alpha, beta, or gamma that are encoded by genes ADH1A, ADH1B, and ADH1C, respectively. It depends on Zn(2+) as a cofactor.

The protein localises to the cytoplasm. It carries out the reaction a primary alcohol + NAD(+) = an aldehyde + NADH + H(+). The catalysed reaction is a secondary alcohol + NAD(+) = a ketone + NADH + H(+). The enzyme catalyses butan-1-ol + NAD(+) = butanal + NADH + H(+). It catalyses the reaction 1-propanol + NAD(+) = propanal + NADH + H(+). Its function is as follows. Alcohol dehydrogenase. Oxidizes primary as well as secondary alcohols. Ethanol is a very poor substrate. The sequence is that of Alcohol dehydrogenase 1A (ADH1A) from Homo sapiens (Human).